A 431-amino-acid chain; its full sequence is Leucine carboxyl methyltransferase 1 (431 aa).

S-adenosyl-L-methionine-binding positions include Arg103, Gly131, Asp159, and Asp219–Leu220. The disordered stretch occupies residues Gln228 to Gln268. Glu289 is a binding site for S-adenosyl-L-methionine.

This sequence belongs to the methyltransferase superfamily. LCMT family.

The enzyme catalyses [phosphatase 2A protein]-C-terminal L-leucine + S-adenosyl-L-methionine = [phosphatase 2A protein]-C-terminal L-leucine methyl ester + S-adenosyl-L-homocysteine. Its function is as follows. Methylates the carboxyl group of the C-terminal leucine residue of protein phosphatase 2A catalytic subunits to form alpha-leucine ester residues. The chain is Leucine carboxyl methyltransferase 1 (ppm-1) from Neurospora crassa (strain ATCC 24698 / 74-OR23-1A / CBS 708.71 / DSM 1257 / FGSC 987).